The sequence spans 191 residues: dTTP/UTP pyrophosphatase (191 aa).

D69 functions as the Proton acceptor in the catalytic mechanism.

It belongs to the Maf family. YhdE subfamily. It depends on a divalent metal cation as a cofactor.

The protein resides in the cytoplasm. It catalyses the reaction dTTP + H2O = dTMP + diphosphate + H(+). It carries out the reaction UTP + H2O = UMP + diphosphate + H(+). Its function is as follows. Nucleoside triphosphate pyrophosphatase that hydrolyzes dTTP and UTP. May have a dual role in cell division arrest and in preventing the incorporation of modified nucleotides into cellular nucleic acids. This is dTTP/UTP pyrophosphatase from Pelotomaculum thermopropionicum (strain DSM 13744 / JCM 10971 / SI).